Reading from the N-terminus, the 1399-residue chain is FYVE, RhoGEF and PH domain-containing protein 6 (1399 aa).

Disordered stretches follow at residues 1 to 99, 138 to 164, 185 to 210, 235 to 281, 299 to 341, and 367 to 479; these read MTSA…KDVR, MKEN…SEKC, LTQQ…NGDH, AHHN…DGIS, YTSK…NGSS, and PVDE…KKPQ. Residues 50-60 are compositionally biased toward low complexity; it reads PAIAPKPKVPT. Over residues 259 to 276 the composition is skewed to basic and acidic residues; the sequence is AESRGHTDSCEPENKRVA. The segment covering 307–321 has biased composition (basic residues); the sequence is KPRKTHAAARLRRQK. 2 stretches are compositionally biased toward polar residues: residues 332–341 and 377–402; these read EPGNSNNGSS and RALT…QQTP. Low complexity predominate over residues 403-418; the sequence is SLDTDSSLTSDSSGSG. The span at 428–453 shows a compositional bias: polar residues; the sequence is TYTQCSTQPLSLPKQVTSACTDQPPA. Phosphoserine is present on residues Ser494, Ser531, and Ser583. The disordered stretch occupies residues 515 to 542; it reads RNYLHHPGPPNHGASASPFDMPNPTSEK. Disordered regions lie at residues 631 to 650 and 657 to 678; these read QHGD…GLES and TGEE…SLES. Ser670 and Ser697 each carry phosphoserine. Residues 768-840 form a disordered region; sequence APDGQLQLDP…KQDEDAGMKS (73 aa). Positions 802 to 817 are enriched in acidic residues; it reads PSDEEVINSSDEDDVS. A compositionally biased stretch (basic and acidic residues) spans 821–838; that stretch reads SKGEPDPLEDKQDEDAGM. A DH domain is found at 841-1030; it reads KVHHIAKEIM…IEVANHANDT (190 aa). The PH 1 domain occupies 1059–1153; the sequence is VFLKEGTLMK…WLEAISSSIE (95 aa). Ser1167 is modified (phosphoserine). An FYVE-type zinc finger spans residues 1191-1250; sequence DTRATMCMICTSEFTLTWRRHHCRACGKIVCQACSSNKYGLDYLKGQLARVCEHCFQELQ. Cys1197, Cys1200, Cys1213, Cys1216, Cys1221, Cys1224, Cys1242, and Cys1245 together coordinate Zn(2+). The PH 2 domain maps to 1302–1398; that stretch reads DSTMSGYLYR…WIDAFQEGTV (97 aa).

The protein localises to the cytoplasm. It localises to the cytoskeleton. May activate CDC42, a member of the Ras-like family of Rho- and Rac proteins, by exchanging bound GDP for free GTP. May play a role in regulating the actin cytoskeleton and cell shape. This chain is FYVE, RhoGEF and PH domain-containing protein 6 (Fgd6), found in Mus musculus (Mouse).